Here is a 370-residue protein sequence, read N- to C-terminus: 3-isopropylmalate dehydrogenase (370 aa).

G77–E90 is a binding site for NAD(+). R97, R107, R135, and D226 together coordinate substrate. Residues D226, D250, and D254 each coordinate Mg(2+). G290–N302 provides a ligand contact to NAD(+).

The protein belongs to the isocitrate and isopropylmalate dehydrogenases family. LeuB type 1 subfamily. Homodimer. It depends on Mg(2+) as a cofactor. Mn(2+) is required as a cofactor.

The protein resides in the cytoplasm. It carries out the reaction (2R,3S)-3-isopropylmalate + NAD(+) = 4-methyl-2-oxopentanoate + CO2 + NADH. The protein operates within amino-acid biosynthesis; L-leucine biosynthesis; L-leucine from 3-methyl-2-oxobutanoate: step 3/4. In terms of biological role, catalyzes the oxidation of 3-carboxy-2-hydroxy-4-methylpentanoate (3-isopropylmalate) to 3-carboxy-4-methyl-2-oxopentanoate. The product decarboxylates to 4-methyl-2 oxopentanoate. The chain is 3-isopropylmalate dehydrogenase from Brucella suis biovar 1 (strain 1330).